The following is a 207-amino-acid chain: Small ribosomal subunit protein uS4c (207 aa).

Positions 92–156 (MRLDNILFRL…YQSIITKRIE (65 aa)) constitute an S4 RNA-binding domain.

It belongs to the universal ribosomal protein uS4 family. Part of the 30S ribosomal subunit. Contacts protein S5. The interaction surface between S4 and S5 is involved in control of translational fidelity.

Its subcellular location is the plastid. The protein localises to the chloroplast. In terms of biological role, one of the primary rRNA binding proteins, it binds directly to 16S rRNA where it nucleates assembly of the body of the 30S subunit. Its function is as follows. With S5 and S12 plays an important role in translational accuracy. In Equisetum pratense (Meadow horsetail), this protein is Small ribosomal subunit protein uS4c (rps4).